A 529-amino-acid chain; its full sequence is Calcium-dependent protein kinase 3 (529 aa).

The segment at 1–73 (MGHRHSKSKS…GRILGRPMEE (73 aa)) is disordered. G2 carries N-myristoyl glycine lipidation. The segment covering 39 to 53 (SGSGTVGSSGSGTGG) has biased composition (gly residues). Residues 78–336 (YEFGRELGRG…AAEVLNHPWI (259 aa)) form the Protein kinase domain. ATP contacts are provided by residues 84–92 (LGRGQFGVT) and K107. D202 functions as the Proton acceptor in the catalytic mechanism. Residue S242 is modified to Phosphoserine. Residues 342–372 (ASDKPLDNAVLSRMKQFRAMNKLKKMALKVI) form an autoinhibitory domain region. EF-hand domains lie at 379 to 414 (EEII…LGSK), 415 to 450 (ISEA…MNRI), 451 to 485 (ERED…KYNM), and 486 to 521 (GDDK…GNPE). D392, D394, N396, E403, D428, D430, D432, S434, E439, D464, D466, S468, Y470, E475, D499, D501, D503, K505, and E510 together coordinate Ca(2+).

This sequence belongs to the protein kinase superfamily. Ser/Thr protein kinase family. CDPK subfamily. In terms of assembly, interacts with GHR1. In terms of tissue distribution, expressed in both guard cells and mesophyll cells.

The protein localises to the cytoplasm. The protein resides in the nucleus. It carries out the reaction L-seryl-[protein] + ATP = O-phospho-L-seryl-[protein] + ADP + H(+). The catalysed reaction is L-threonyl-[protein] + ATP = O-phospho-L-threonyl-[protein] + ADP + H(+). Its activity is regulated as follows. Activated by calcium. Autophosphorylation may play an important role in the regulation of the kinase activity. Functionally, may play a role in signal transduction pathways that involve calcium as a second messenger. Functions in abscisic acid (ABA) regulation of guard cell S-type anion- and Ca(2+)-permeable channels and stomatal closure. This Arabidopsis thaliana (Mouse-ear cress) protein is Calcium-dependent protein kinase 3.